Reading from the N-terminus, the 518-residue chain is uncharacterized protein (518 aa).

Transmembrane regions (helical) follow at residues 13–33 (WAIS…GIIS), 49–69 (WGSW…PIVG), 86–106 (CLFG…LFLI), 109–129 (LIQA…ILAT), 141–161 (LLGA…SFLL), 169–189 (WLFL…ACFI), 202–222 (AAGI…MTNL), 231–251 (LGNP…AALI), 280–300 (LIIG…PSYV), 312–332 (GYWM…GGAL), 341–361 (TVIL…LWVT), 365–385 (EFVI…GAPL), 410–430 (IGLT…FDQI), and 493–513 (LYAA…IPAF).

The protein belongs to the major facilitator superfamily. TCR/Tet family.

The protein localises to the cell membrane. This is an uncharacterized protein from Bacillus subtilis (strain 168).